The chain runs to 504 residues: Maturase K (504 aa).

The protein belongs to the intron maturase 2 family. MatK subfamily.

It localises to the plastid. Its subcellular location is the chloroplast. Usually encoded in the trnK tRNA gene intron. Probably assists in splicing its own and other chloroplast group II introns. In Nepenthes alata (Winged pitcher plant), this protein is Maturase K.